The chain runs to 147 residues: Large ribosomal subunit protein uL15 (147 aa).

The disordered stretch occupies residues 1 to 42 (MTIKLHHLRPAPGAKTDKTRVGRGEGSKGKTAGRGTKGTKAR). Basic and acidic residues predominate over residues 15-28 (KTDKTRVGRGEGSK).

It belongs to the universal ribosomal protein uL15 family. As to quaternary structure, part of the 50S ribosomal subunit.

Binds to the 23S rRNA. This chain is Large ribosomal subunit protein uL15, found in Nocardia farcinica (strain IFM 10152).